A 383-amino-acid chain; its full sequence is Lipid-A-disaccharide synthase (383 aa).

This sequence belongs to the LpxB family.

The catalysed reaction is a lipid X + a UDP-2-N,3-O-bis[(3R)-3-hydroxyacyl]-alpha-D-glucosamine = a lipid A disaccharide + UDP + H(+). Its pathway is bacterial outer membrane biogenesis; LPS lipid A biosynthesis. In terms of biological role, condensation of UDP-2,3-diacylglucosamine and 2,3-diacylglucosamine-1-phosphate to form lipid A disaccharide, a precursor of lipid A, a phosphorylated glycolipid that anchors the lipopolysaccharide to the outer membrane of the cell. The chain is Lipid-A-disaccharide synthase from Aliivibrio salmonicida (strain LFI1238) (Vibrio salmonicida (strain LFI1238)).